Reading from the N-terminus, the 405-residue chain is Saccharopepsin (405 aa).

Positions 1-22 (MFSLKALLPLALLLVSANQVAA) are cleaved as a signal peptide. Residues 23-76 (KVHKAKIYKHELSDEMKEVTFEQHLAHLGQKYLTQFEKANPEVVFSREHPFFTE) constitute a propeptide, activation peptide. A Peptidase A1 domain is found at 91–402 (YYTDITLGTP…DLGNNAVGLA (312 aa)). Residue aspartate 109 is part of the active site. Cysteine 122 and cysteine 127 form a disulfide bridge. N-linked (GlcNAc...) asparagine glycosylation is present at asparagine 144. Aspartate 294 is a catalytic residue. Cysteines 328 and 361 form a disulfide. N-linked (GlcNAc...) asparagine glycosylation occurs at asparagine 345.

It belongs to the peptidase A1 family.

It localises to the vacuole. The enzyme catalyses Hydrolysis of proteins with broad specificity for peptide bonds. Cleaves -Leu-Leu-|-Val-Tyr- bond in a synthetic substrate. Does not act on esters of Tyr or Arg.. Its function is as follows. Aspartyl protease implicated in the post-translational regulation of S.cerevisiae vacuolar proteinases. Acts on YSCB, on YSCY and on itself. The polypeptide is Saccharopepsin (PEP4) (Saccharomyces cerevisiae (strain ATCC 204508 / S288c) (Baker's yeast)).